The following is a 444-amino-acid chain: MRNIIYFILSLLFSVTSYALETINIEHGRADPTPIAVNKFDADNSAADVLGHDMVKVISNDLKLSGLFRPISAASFIEEKTGIEYKPLFAAWRQINASLLVNGEVKKLESGKFKVSFILWDTLLEKQLAGEMLEVPKNLWRRAAHKIADKIYEKITGDAGYFDTKIVYVSESSSLPKIKRIALMDYDGANNKYLTNGKSLVLTPRFARSADKIFYVSYATKRRVLVYEKDLKTGKESVVGDFPGISFAPRFSPDGRKAVMSIAKNGSTHIYEIDLATKQLHKLTDGFGINTSPSYSPDGKKIVYNSDRNGVPQLYIMNSDGSDVQRISFGGGSYAAPSWSPRGDYIAFTKITKGDGGKTFNIGIMKACPQDDENSERIITSGYLVESPCWSPNGRVIMFAKGWPSSAKAPGKNKIFAIDLTGHNEREIMTPADASDPEWSGVLN.

Positions 1–19 (MRNIIYFILSLLFSVTSYA) are cleaved as a signal peptide.

This sequence belongs to the TolB family. In terms of assembly, the Tol-Pal system is composed of five core proteins: the inner membrane proteins TolA, TolQ and TolR, the periplasmic protein TolB and the outer membrane protein Pal. They form a network linking the inner and outer membranes and the peptidoglycan layer.

The protein resides in the periplasm. Functionally, part of the Tol-Pal system, which plays a role in outer membrane invagination during cell division and is important for maintaining outer membrane integrity. In Rickettsia conorii (strain ATCC VR-613 / Malish 7), this protein is Tol-Pal system protein TolB.